The sequence spans 360 residues: Protein YIM1-1 (360 aa).

This sequence belongs to the YIM1 family.

It localises to the lipid droplet. It is found in the mitochondrion. The sequence is that of Protein YIM1-1 (YIM1-1) from Lachancea thermotolerans (strain ATCC 56472 / CBS 6340 / NRRL Y-8284) (Yeast).